The following is a 577-amino-acid chain: MRPFLLRAAQLLALLALALSTEAPSLSAETTPGPVTEVPSPSAEVWDLSTEAGDDDLDGDLNGDDRRAGFGSALASLREAPPAHLVNVSEGANFTLDARGDGAVVAGIWTFLPVRGCDAVAVTMVCFETACHPDLVLGRACVPEAPERGIGDYLPPEVPRLQREPPIVTPERWSPHLTVRRATPNDTGLYTLHDASGPRAVFFVAVGDRPPAPLAPVGPARHEPRFHALGFHSQLFSPGDTFDLMPRVVSDMGDSRENFTATLDWYYARAPPRCLLYYVYEPCIYHPRAPECLRPVDPACSFTSPARAALVARRAYASCSPLLGDRWLTACPFDAFGEEVHTNATADESGLYVLVMTHNGHVATWDYTLVATAAEYVTVIKELTAPARAPGTPWGPGGGDDAIYVDGVTTPAPPARPWNPYGRTTPGRLFVLALGSFVMTCVVGGAVWLCVLCSRRRAASRPFRVPTRAGTRMLSPVYTSLPTHEDYYDGDDDDEEAGDARRRPSSPGGDSGYEGPYVSLDAEDEFSSDEDDGLYVRPEEAPRSGFDVWFRDPEKPEVTNGPNYGVTASRLLNARPA.

Positions M1 to S20 are cleaved as a signal peptide. The Virion surface portion of the chain corresponds to T21–R428. N-linked (GlcNAc...) asparagine; by host glycosylation is found at N87 and N93. Residues C117–C141 are interaction with gI. Residues N185 and N258 are each glycosylated (N-linked (GlcNAc...) asparagine; by host). 3 disulfide bridges follow: C274–C300, C283–C292, and C319–C331. N-linked (GlcNAc...) asparagine; by host glycosylation occurs at N343. A helical membrane pass occupies residues L429–L449. The Intravirion segment spans residues C450–A577. The Internalization motif motif lies at Y478–L481. Positions L481–P538 are disordered. Residues E485–E496 form an acidic region. Acidic residues-rich tracts occupy residues Y488–A497 and D521–G533.

Belongs to the alphaherpesvirinae glycoprotein E family. In terms of assembly, interacts with gI. In terms of processing, phosphorylated within the acidic cluster. Phosphorylation determines whether endocytosed viral gE traffics to the trans-Golgi network or recycles to the cell membrane.

It is found in the virion membrane. Its subcellular location is the host cell membrane. It localises to the host cell junction. The protein resides in the host Golgi apparatus membrane. The protein localises to the host endosome membrane. In epithelial cells, the heterodimer gE/gI is required for the cell-to-cell spread of the virus, by sorting nascent virions to cell junctions. Once the virus reaches the cell junctions, virus particles can spread to adjacent cells extremely rapidly through interactions with cellular receptors that accumulate at these junctions. Implicated in basolateral spread in polarized cells. In neuronal cells, gE/gI is essential for the anterograde spread of the infection throughout the host nervous system. Together with US9, the heterodimer gE/gI is involved in the sorting and transport of viral structural components toward axon tips. The protein is Envelope glycoprotein E (gE) of Suid herpesvirus 1 (strain Rice) (SuHV-1).